The chain runs to 77 residues: Omega-conotoxin-like SO-5 (77 aa).

An N-terminal signal peptide occupies residues 1 to 22 (MKLTCVMIVAVLLLTACQLITA). Residues 23–42 (DDSRGTQKHRSLRSTTKVSK) constitute a propeptide that is removed on maturation. 3 cysteine pairs are disulfide-bonded: Cys-46–Cys-61, Cys-53–Cys-64, and Cys-60–Cys-71.

Belongs to the conotoxin O1 superfamily. As to expression, expressed by the venom duct.

The protein resides in the secreted. Functionally, omega-conotoxins act at presynaptic membranes, they bind and block voltage-gated calcium channels (Cav). This is Omega-conotoxin-like SO-5 (SO5) from Conus striatus (Striated cone).